Consider the following 763-residue polypeptide: MRFTLKKIFFVFLTLLIISIGYLLLQSVDLQRIRELLHDSEKFDLESLKQASLEIRKEIHYTNYLFSGYDNFTQQFSDEETLKQTSLNDKCKLVFTQWKESHPDFEFKTFEPEYERYDKSSDRKELFFKERINQLRKRFEKDSNNKNKQFTLSRQDNKTISQEYMEHVNRSKNVLQFMADFVSMMRLYGKCFFGRELDDELKSIYNEFRGKLFPFISSQAPKFRKSGETEEFGWPIYDNENNIIDRKTEFGDNPIEFLQKNSKGKGIVISVSTRYAKDAMRLIKILRALNNRLPIQIIYKNDITKKNIELLEFAAVATPEELFDPETIRDGAKFMPELNLLEHYKNYGSEFPIQDLTFVNIAGCVSRPYRFSFPGYSNKILAMLYSSFEEIILFDADVVPTVNPQEFFDSKYYKSSGTYFFQDRSLRDFNDFIETNFFSTLFPSNEKSIETIFDIPRVGEKTFNNKYMTGWRHYQEAGVVAYNKMQHFLGILMMFPLALWSEPVQSSIWGDKEMYWLGLSMAGDENYEFNKYAAASVGEKTTEQKYKYYPNSDSNEVCSTHPGHIDDNGRLLWINSGFSYCKKNGYFRDKGKFPFSTFELNDLVELYNSPIKIRAGLVPPDLPNQREPGSPPDTKPEMEFRKSWKSRKKDTDEINEKLPEGQEPYDFISEWGPQKGWVKNGICSGYYYCAYDKITSYSSEKEFDTGTLFEFDTKSCELYDYLSKIWHTGGSKMKPKVKLETEKLGTGSDKEQXKDATTVRLRI.

The Cytoplasmic segment spans residues 1-7 (MRFTLKK). Residues 8–28 (IFFVFLTLLIISIGYLLLQSV) form a helical membrane-spanning segment. Residues 29-763 (DLQRIRELLH…KDATTVRLRI (735 aa)) lie on the Lumenal side of the membrane. Residues Asn71, Asn157, and Asn169 are each glycosylated (N-linked (GlcNAc...) asparagine). The segment at 617–659 (LVPPDLPNQREPGSPPDTKPEMEFRKSWKSRKKDTDEINEKLP) is disordered. Over residues 649–659 (KDTDEINEKLP) the composition is skewed to basic and acidic residues.

This sequence belongs to the MNN1/MNT family.

The protein resides in the golgi apparatus membrane. It participates in protein modification; protein glycosylation. In terms of biological role, responsible for addition of the terminal mannose residues to the outer chain of core N-linked polysaccharides and to O-linked mannotriose. Implicated in late Golgi modifications. The chain is Putative alpha-1,3-mannosyltransferase MNN15 (MNN15) from Candida albicans (strain SC5314 / ATCC MYA-2876) (Yeast).